The following is a 259-amino-acid chain: Probable dihydroorotate dehydrogenase B (NAD(+)), electron transfer subunit (259 aa).

One can recognise an FAD-binding FR-type domain in the interval 1 to 89 (MLPLNVTITQ…RGPFGKGFTL (89 aa)). The [2Fe-2S] cluster site is built by C211, C216, C219, and C229.

It belongs to the PyrK family. Heterotetramer of 2 PyrK and 2 PyrD type B subunits. It depends on [2Fe-2S] cluster as a cofactor. Requires FAD as cofactor.

It participates in pyrimidine metabolism; UMP biosynthesis via de novo pathway; orotate from (S)-dihydroorotate (NAD(+) route): step 1/1. Its function is as follows. Responsible for channeling the electrons from the oxidation of dihydroorotate from the FMN redox center in the PyrD type B subunit to the ultimate electron acceptor NAD(+). In Methanosarcina acetivorans (strain ATCC 35395 / DSM 2834 / JCM 12185 / C2A), this protein is Probable dihydroorotate dehydrogenase B (NAD(+)), electron transfer subunit.